The chain runs to 488 residues: Ribulose bisphosphate carboxylase large chain 1 (488 aa).

The substrate site is built by Asn128 and Thr178. Residue Lys180 is the Proton acceptor of the active site. Substrate is bound at residue Lys182. Positions 206, 208, and 209 each coordinate Mg(2+). Lys206 bears the N6-carboxylysine mark. His298 functions as the Proton acceptor in the catalytic mechanism. Arg299, His331, and Ser383 together coordinate substrate.

It belongs to the RuBisCO large chain family. Type I subfamily. Heterohexadecamer of 8 large chains and 8 small chains. Mg(2+) serves as cofactor.

It carries out the reaction 2 (2R)-3-phosphoglycerate + 2 H(+) = D-ribulose 1,5-bisphosphate + CO2 + H2O. The enzyme catalyses D-ribulose 1,5-bisphosphate + O2 = 2-phosphoglycolate + (2R)-3-phosphoglycerate + 2 H(+). Its function is as follows. RuBisCO catalyzes two reactions: the carboxylation of D-ribulose 1,5-bisphosphate, the primary event in carbon dioxide fixation, as well as the oxidative fragmentation of the pentose substrate. Both reactions occur simultaneously and in competition at the same active site. In Methylibium petroleiphilum (strain ATCC BAA-1232 / LMG 22953 / PM1), this protein is Ribulose bisphosphate carboxylase large chain 1.